The following is a 508-amino-acid chain: Maturase K (508 aa).

The protein belongs to the intron maturase 2 family. MatK subfamily.

Its subcellular location is the plastid. The protein localises to the chloroplast. Functionally, usually encoded in the trnK tRNA gene intron. Probably assists in splicing its own and other chloroplast group II introns. The chain is Maturase K from Collinsia heterophylla (Purple Chinese houses).